The following is a 387-amino-acid chain: Hydroxycarboxylic acid receptor 3 (387 aa).

The Extracellular portion of the chain corresponds to 1–28 (MNRHHLQDHFLEIDKKNCCVFRDDFIAK). Residues 29-50 (VLPPVLGLEFIFGLLGNGLALW) traverse the membrane as a helical segment. Residues 51–63 (IFCFHLKSWKSSR) are Cytoplasmic-facing. Residues 64-85 (IFLFNLAVADFLLIICLPFVMD) traverse the membrane as a helical segment. Residues 86 to 102 (YYVRRSDWKFGDIPCRL) lie on the Extracellular side of the membrane. Cys100 and Cys177 are oxidised to a cystine. The helical transmembrane segment at 103 to 123 (VLFMFAMNRQGSIIFLTVVAV) threads the bilayer. Residues 124 to 142 (DRYFRVVHPHHALNKISNW) are Cytoplasmic-facing. A helical transmembrane segment spans residues 143 to 163 (TAAIISCLLWGITVGLTVHLL). At 164 to 194 (KKKLLIQNGTANVCISFSICHTFRWHEAMFL) the chain is on the extracellular side. The chain crosses the membrane as a helical span at residues 195–209 (LEFFLPLGIILFCSA). The Cytoplasmic portion of the chain corresponds to 210 to 236 (RIIWSLRQRQMDRHAKIKRAITFIMVV). Residues 237–256 (AIVFVICFLPSVVVRIHIFW) form a helical membrane-spanning segment. At 257–273 (LLHTSGTQNCEVYRSVD) the chain is on the extracellular side. A helical membrane pass occupies residues 274–298 (LAFFITLSFTYMNSMLDPVVYYFSS). Topologically, residues 299–387 (PSFPNFFSTL…LEKQLGCCIE (89 aa)) are cytoplasmic. The interval 319 to 343 (GEPDNNRSTSVELTGDPNKTRGAPE) is disordered.

The protein belongs to the G-protein coupled receptor 1 family. As to expression, expression largely restricted to adipose tissue and spleen.

The protein localises to the cell membrane. Its function is as follows. Receptor for 3-OH-octanoid acid mediates a negative feedback regulation of adipocyte lipolysis to counteract prolipolytic influences under conditions of physiological or pathological increases in beta-oxidation rates. Acts as a low affinity receptor for nicotinic acid. This pharmacological effect requires nicotinic acid doses that are much higher than those provided by a normal diet. The sequence is that of Hydroxycarboxylic acid receptor 3 (HCAR3) from Homo sapiens (Human).